The chain runs to 254 residues: rRNA N-glycosylase sapovaccarin-S1 (254 aa).

Belongs to the ribosome-inactivating protein family. Type 1 RIP subfamily. As to expression, expressed in seeds; most abundant in the perisperm.

The catalysed reaction is Endohydrolysis of the N-glycosidic bond at one specific adenosine on the 28S rRNA.. Its function is as follows. Exhibits N-glycosylase activity. Catalyzes the release of one adenine from a ribosome. Acts as a ribosome-inactivating protein and inhibits protein synthesis in a rabbit-reticulocyte lysate system and in various cell lines (in vitro). Induces cell death in Huh-7 liver cells. May contribute to the protection against plant pests and predators or play a role in regulating the death of plant cells. This Gypsophila vaccaria (Cow soapwort) protein is rRNA N-glycosylase sapovaccarin-S1.